The sequence spans 400 residues: Argininosuccinate synthase (400 aa).

Residue 8 to 16 (AYSGGLDTS) coordinates ATP. Residues Y87 and S92 each coordinate L-citrulline. Residue G117 coordinates ATP. The L-aspartate site is built by T119, N123, and D124. N123 contributes to the L-citrulline binding site. R127, S175, E259, and Y271 together coordinate L-citrulline.

It belongs to the argininosuccinate synthase family. Type 1 subfamily. As to quaternary structure, homotetramer.

The protein localises to the cytoplasm. It catalyses the reaction L-citrulline + L-aspartate + ATP = 2-(N(omega)-L-arginino)succinate + AMP + diphosphate + H(+). It functions in the pathway amino-acid biosynthesis; L-arginine biosynthesis; L-arginine from L-ornithine and carbamoyl phosphate: step 2/3. The sequence is that of Argininosuccinate synthase from Parafrankia sp. (strain EAN1pec).